Consider the following 118-residue polypeptide: Succinate dehydrogenase assembly factor 1, mitochondrial (118 aa).

Positions 14–16 (LYR) match the LYR motif 1; required for interaction with HSC20 motif. The LYR motif 2; not required for interaction with HSC20 motif lies at 53-55 (LYR). Residues 53 to 65 (LYRRGRRQLQMLR) form an interaction with SDHB region. Residues 72–118 (MGAFVRTRGPTEESNGAGAPGTLSGEGDDPRKPLDSMRTPKTPLDGR) are disordered.

This sequence belongs to the complex I LYR family. SDHAF1 subfamily. In terms of assembly, interacts with SDHB within an SDHA-SDHB subcomplex. Also interacts with the iron-sulfur transfer complex formed by HSC20, HSPA9 and ISCU through direct binding to HSC20. Binding of SDHAF1 to SDHB precedes and is necessary for recruitment of the iron-sulfur transfer complex by SDHAF1.

It localises to the mitochondrion matrix. Functionally, plays an essential role in the assembly of succinate dehydrogenase (SDH), an enzyme complex (also referred to as respiratory complex II) that is a component of both the tricarboxylic acid (TCA) cycle and the mitochondrial electron transport chain, and which couples the oxidation of succinate to fumarate with the reduction of ubiquinone (coenzyme Q) to ubiquinol. Promotes maturation of the iron-sulfur protein subunit SDHB of the SDH catalytic dimer, protecting it from the deleterious effects of oxidants. May act together with SDHAF3. Contributes to iron-sulfur cluster incorporation into SDHB by binding to SDHB and recruiting the iron-sulfur transfer complex formed by HSC20, HSPA9 and ISCU through direct binding to HSC20. This chain is Succinate dehydrogenase assembly factor 1, mitochondrial, found in Bos taurus (Bovine).